Reading from the N-terminus, the 344-residue chain is Arginine N-succinyltransferase (344 aa).

Residue L125 participates in succinyl-CoA binding. H229 functions as the Proton donor in the catalytic mechanism.

The protein belongs to the arginine N-succinyltransferase family.

The catalysed reaction is succinyl-CoA + L-arginine = N(2)-succinyl-L-arginine + CoA + H(+). It participates in amino-acid degradation; L-arginine degradation via AST pathway; L-glutamate and succinate from L-arginine: step 1/5. Its function is as follows. Catalyzes the transfer of succinyl-CoA to arginine to produce N(2)-succinylarginine. The sequence is that of Arginine N-succinyltransferase from Salmonella agona (strain SL483).